Reading from the N-terminus, the 319-residue chain is Polyprenyl transferase macG (319 aa).

The next 9 membrane-spanning stretches (helical) occupy residues 28 to 45 (AWLC…AAGM), 48 to 68 (VSLE…SVTA), 106 to 126 (AVVA…GTLG), 127 to 147 (PAVM…PFMK), 152 to 172 (FPQV…WVGI), 182 to 202 (ALPL…FYAT), 224 to 244 (VQIL…VTAL), 249 to 269 (SLIF…WHIL), and 289 to 309 (LGLY…VYDI).

The protein belongs to the UbiA prenyltransferase family. Requires Mg(2+) as cofactor.

It is found in the membrane. The protein operates within secondary metabolite biosynthesis; terpenoid biosynthesis. Functionally, polyprenyl transferase; part of the gene cluster that mediates the biosynthesis of macrophorins, isoprenoid epoxycyclohexenones containing cyclized drimane moieties. The first step of the pathway is the synthesis of 6-methylsalicylic acid (6-MSA) by the polyketide synthase macA. 6-MSA is then converted to m-cresol by the decarboxylase macB. The cytochrome P450 monooxygenase macC then catalyzes the oxidation of m-cresol to toluquinol. Epoxidation of toluquinol is then performed by the short chain dehydrogenase macD, with the help of macE, and a further prenylation by macG leads to 7-deacetoxyyanuthone A. The next step is the hydroxylation of C-22 of 7-deacetoxyyanuthone A by the cytochrome P450 monooxygenase macH to yield 22-deacetylyanuthone A. O-Mevalon transferase macI then attaches mevalon to the hydroxyl group of 22-deacetylyanuthone A to produce yanuthone E. The terpene cyclase macJ catalyzes the cyclization of 22-deacetylyanuthone A to macrophorin A. MacJ is also able to catalyze cyclization of yanuthone E and 7-deacetoxyyanuthone A to their corresponding macrophorins. The macJ products can be further modified by macH and macJ, as well as by the FAD-dependent monooxygenase macF, to produce additional macrophorins, including 4'-oxomacrophorin A, 4'-oxomacrophorin D and 4'-oxomacrophorin E. In Penicillium terrestre, this protein is Polyprenyl transferase macG.